A 489-amino-acid chain; its full sequence is ATP-dependent zinc metalloprotease FtsH 3 (489 aa).

Over 1-14 (MNPRPVRPGGSLQQ) the chain is Cytoplasmic. Residues 15–31 (SLLALGSLSVAVGLAVW) form a helical membrane-spanning segment. Residues 32-489 (QQRTLGRGRS…GPRPARPAMN (458 aa)) lie on the Extracellular side of the membrane. Position 95-102 (95-102 (GPPGTGKT)) interacts with ATP. His-315 provides a ligand contact to Zn(2+). The active site involves Glu-316. The Zn(2+) site is built by His-319 and Asp-391.

The protein in the central section; belongs to the AAA ATPase family. It in the C-terminal section; belongs to the peptidase M41 family. Homohexamer. Requires Zn(2+) as cofactor.

The protein localises to the cell membrane. Acts as a processive, ATP-dependent zinc metallopeptidase for both cytoplasmic and membrane proteins. Plays a role in the quality control of integral membrane proteins. The sequence is that of ATP-dependent zinc metalloprotease FtsH 3 from Sphaerobacter thermophilus (strain ATCC 49802 / DSM 20745 / KCCM 41009 / NCIMB 13125 / S 6022).